A 266-amino-acid polypeptide reads, in one-letter code: PDZ domain-containing protein 9 (266 aa).

Positions 27-109 (KVIQTKLTVG…GTVLQIKAYR (83 aa)) constitute a PDZ domain.

The protein is PDZ domain-containing protein 9 (Pdzd9) of Mus musculus (Mouse).